The chain runs to 197 residues: dITP/XTP pyrophosphatase (197 aa).

Residue 8–13 (TGNPGK) coordinates substrate. Residues glutamate 40 and aspartate 69 each contribute to the Mg(2+) site. Aspartate 69 (proton acceptor) is an active-site residue. Substrate-binding positions include serine 70, 154 to 157 (FGYD), lysine 177, and 182 to 183 (HR).

This sequence belongs to the HAM1 NTPase family. In terms of assembly, homodimer. It depends on Mg(2+) as a cofactor.

The enzyme catalyses XTP + H2O = XMP + diphosphate + H(+). It catalyses the reaction dITP + H2O = dIMP + diphosphate + H(+). It carries out the reaction ITP + H2O = IMP + diphosphate + H(+). Pyrophosphatase that catalyzes the hydrolysis of nucleoside triphosphates to their monophosphate derivatives, with a high preference for the non-canonical purine nucleotides XTP (xanthosine triphosphate), dITP (deoxyinosine triphosphate) and ITP. Seems to function as a house-cleaning enzyme that removes non-canonical purine nucleotides from the nucleotide pool, thus preventing their incorporation into DNA/RNA and avoiding chromosomal lesions. The chain is dITP/XTP pyrophosphatase from Yersinia pestis.